A 449-amino-acid polypeptide reads, in one-letter code: Asparagine--tRNA ligase (449 aa).

Belongs to the class-II aminoacyl-tRNA synthetase family. Homodimer.

It is found in the cytoplasm. The catalysed reaction is tRNA(Asn) + L-asparagine + ATP = L-asparaginyl-tRNA(Asn) + AMP + diphosphate + H(+). This chain is Asparagine--tRNA ligase, found in Deinococcus geothermalis (strain DSM 11300 / CIP 105573 / AG-3a).